We begin with the raw amino-acid sequence, 69 residues long: DNA-directed RNA polymerase subunit epsilon (69 aa).

It belongs to the RNA polymerase subunit epsilon family. RNAP is composed of a core of 2 alpha, a beta and a beta' subunit. The core is associated with a delta subunit, and at least one of epsilon or omega. When a sigma factor is associated with the core the holoenzyme is formed, which can initiate transcription.

It carries out the reaction RNA(n) + a ribonucleoside 5'-triphosphate = RNA(n+1) + diphosphate. In terms of biological role, a non-essential component of RNA polymerase (RNAP). The sequence is that of DNA-directed RNA polymerase subunit epsilon from Shouchella clausii (strain KSM-K16) (Alkalihalobacillus clausii).